Consider the following 542-residue polypeptide: Putative selenium-binding protein (542 aa).

The protein belongs to the selenium-binding protein family.

In Caenorhabditis elegans, this protein is Putative selenium-binding protein.